A 195-amino-acid polypeptide reads, in one-letter code: ATP-dependent Clp protease proteolytic subunit (195 aa).

The active-site Nucleophile is S98. H123 is an active-site residue.

Belongs to the peptidase S14 family. In terms of assembly, fourteen ClpP subunits assemble into 2 heptameric rings which stack back to back to give a disk-like structure with a central cavity, resembling the structure of eukaryotic proteasomes.

The protein resides in the cytoplasm. The enzyme catalyses Hydrolysis of proteins to small peptides in the presence of ATP and magnesium. alpha-casein is the usual test substrate. In the absence of ATP, only oligopeptides shorter than five residues are hydrolyzed (such as succinyl-Leu-Tyr-|-NHMec, and Leu-Tyr-Leu-|-Tyr-Trp, in which cleavage of the -Tyr-|-Leu- and -Tyr-|-Trp bonds also occurs).. Functionally, cleaves peptides in various proteins in a process that requires ATP hydrolysis. Has a chymotrypsin-like activity. Plays a major role in the degradation of misfolded proteins. In Thermoanaerobacter pseudethanolicus (strain ATCC 33223 / 39E) (Clostridium thermohydrosulfuricum), this protein is ATP-dependent Clp protease proteolytic subunit.